Here is a 253-residue protein sequence, read N- to C-terminus: Imidazole glycerol phosphate synthase subunit HisF (253 aa).

Active-site residues include aspartate 11 and aspartate 130.

This sequence belongs to the HisA/HisF family. Heterodimer of HisH and HisF.

It localises to the cytoplasm. The enzyme catalyses 5-[(5-phospho-1-deoxy-D-ribulos-1-ylimino)methylamino]-1-(5-phospho-beta-D-ribosyl)imidazole-4-carboxamide + L-glutamine = D-erythro-1-(imidazol-4-yl)glycerol 3-phosphate + 5-amino-1-(5-phospho-beta-D-ribosyl)imidazole-4-carboxamide + L-glutamate + H(+). It functions in the pathway amino-acid biosynthesis; L-histidine biosynthesis; L-histidine from 5-phospho-alpha-D-ribose 1-diphosphate: step 5/9. Functionally, IGPS catalyzes the conversion of PRFAR and glutamine to IGP, AICAR and glutamate. The HisF subunit catalyzes the cyclization activity that produces IGP and AICAR from PRFAR using the ammonia provided by the HisH subunit. The protein is Imidazole glycerol phosphate synthase subunit HisF of Geotalea daltonii (strain DSM 22248 / JCM 15807 / FRC-32) (Geobacter daltonii).